Consider the following 227-residue polypeptide: MANHSQLGFQDASSPIMEELVEFHDHALMVALAICSLVLYLLTLMLTQKLSSNTVDAQEVELIWTILPAIVLVLLALPSLQILYMMDEIEEPDLTLKAIGHQWYWSYEYTDFKDLSFDSYMTPTTDLPQGHFRLLEVDHRIVIPMESPIRIIITADDVLHSWAVPTLGVKTDAIPGRLNQTSFITTRPGVFYGQCSEICGANHSYMPIVVESTPLKHFETWSSLLSS.

The Mitochondrial intermembrane portion of the chain corresponds to 1 to 14 (MANHSQLGFQDASS). A helical membrane pass occupies residues 15-45 (PIMEELVEFHDHALMVALAICSLVLYLLTLM). Residues 46-58 (LTQKLSSNTVDAQ) lie on the Mitochondrial matrix side of the membrane. Residues 59–86 (EVELIWTILPAIVLVLLALPSLQILYMM) form a helical membrane-spanning segment. At 87-227 (DEIEEPDLTL…FETWSSLLSS (141 aa)) the chain is on the mitochondrial intermembrane side. Residues His160, Cys195, Glu197, Cys199, His203, and Met206 each coordinate Cu cation. Glu197 contributes to the Mg(2+) binding site.

It belongs to the cytochrome c oxidase subunit 2 family. As to quaternary structure, component of the cytochrome c oxidase (complex IV, CIV), a multisubunit enzyme composed of 14 subunits. The complex is composed of a catalytic core of 3 subunits MT-CO1, MT-CO2 and MT-CO3, encoded in the mitochondrial DNA, and 11 supernumerary subunits COX4I, COX5A, COX5B, COX6A, COX6B, COX6C, COX7A, COX7B, COX7C, COX8 and NDUFA4, which are encoded in the nuclear genome. The complex exists as a monomer or a dimer and forms supercomplexes (SCs) in the inner mitochondrial membrane with NADH-ubiquinone oxidoreductase (complex I, CI) and ubiquinol-cytochrome c oxidoreductase (cytochrome b-c1 complex, complex III, CIII), resulting in different assemblies (supercomplex SCI(1)III(2)IV(1) and megacomplex MCI(2)III(2)IV(2)). Found in a complex with TMEM177, COA6, COX18, COX20, SCO1 and SCO2. Interacts with TMEM177 in a COX20-dependent manner. Interacts with COX20. Interacts with COX16. It depends on Cu cation as a cofactor.

Its subcellular location is the mitochondrion inner membrane. The enzyme catalyses 4 Fe(II)-[cytochrome c] + O2 + 8 H(+)(in) = 4 Fe(III)-[cytochrome c] + 2 H2O + 4 H(+)(out). In terms of biological role, component of the cytochrome c oxidase, the last enzyme in the mitochondrial electron transport chain which drives oxidative phosphorylation. The respiratory chain contains 3 multisubunit complexes succinate dehydrogenase (complex II, CII), ubiquinol-cytochrome c oxidoreductase (cytochrome b-c1 complex, complex III, CIII) and cytochrome c oxidase (complex IV, CIV), that cooperate to transfer electrons derived from NADH and succinate to molecular oxygen, creating an electrochemical gradient over the inner membrane that drives transmembrane transport and the ATP synthase. Cytochrome c oxidase is the component of the respiratory chain that catalyzes the reduction of oxygen to water. Electrons originating from reduced cytochrome c in the intermembrane space (IMS) are transferred via the dinuclear copper A center (CU(A)) of subunit 2 and heme A of subunit 1 to the active site in subunit 1, a binuclear center (BNC) formed by heme A3 and copper B (CU(B)). The BNC reduces molecular oxygen to 2 water molecules using 4 electrons from cytochrome c in the IMS and 4 protons from the mitochondrial matrix. This chain is Cytochrome c oxidase subunit 2 (MT-CO2), found in Coturnix japonica (Japanese quail).